The primary structure comprises 347 residues: NADH-quinone oxidoreductase subunit H (347 aa).

8 consecutive transmembrane segments (helical) span residues 13-33, 82-102, 115-135, 161-181, 198-218, 248-268, 283-303, and 321-341; these read LLILLKSVVLIVVLLIFVAYI, GVFLLAPLVSAVLAISAWAVI, VGILYVFAISSLEVYGVIMGG, IGFVIVTVLLTAGSLNLSDIV, FLDWNWLALFPMFIIFFISAL, FLLFFLGEYVAIVLMCALATI, FTWVPGVIWFVLKVCFVFFGI, and LGWKVFLPISLFMVVATAAFL.

It belongs to the complex I subunit 1 family. As to quaternary structure, NDH-1 is composed of 14 different subunits. Subunits NuoA, H, J, K, L, M, N constitute the membrane sector of the complex.

Its subcellular location is the cell inner membrane. The enzyme catalyses a quinone + NADH + 5 H(+)(in) = a quinol + NAD(+) + 4 H(+)(out). In terms of biological role, NDH-1 shuttles electrons from NADH, via FMN and iron-sulfur (Fe-S) centers, to quinones in the respiratory chain. The immediate electron acceptor for the enzyme in this species is believed to be ubiquinone. Couples the redox reaction to proton translocation (for every two electrons transferred, four hydrogen ions are translocated across the cytoplasmic membrane), and thus conserves the redox energy in a proton gradient. This subunit may bind ubiquinone. In Mesorhizobium japonicum (strain LMG 29417 / CECT 9101 / MAFF 303099) (Mesorhizobium loti (strain MAFF 303099)), this protein is NADH-quinone oxidoreductase subunit H.